We begin with the raw amino-acid sequence, 96 residues long: Co-chaperonin GroES (96 aa).

Belongs to the GroES chaperonin family. As to quaternary structure, heptamer of 7 subunits arranged in a ring. Interacts with the chaperonin GroEL.

The protein localises to the cytoplasm. Its function is as follows. Together with the chaperonin GroEL, plays an essential role in assisting protein folding. The GroEL-GroES system forms a nano-cage that allows encapsulation of the non-native substrate proteins and provides a physical environment optimized to promote and accelerate protein folding. GroES binds to the apical surface of the GroEL ring, thereby capping the opening of the GroEL channel. The chain is Co-chaperonin GroES from Shewanella denitrificans (strain OS217 / ATCC BAA-1090 / DSM 15013).